The sequence spans 308 residues: Ribosomal RNA small subunit methyltransferase H (308 aa).

Residues 32 to 34 (GGH), aspartate 52, phenylalanine 78, aspartate 100, and glutamine 107 contribute to the S-adenosyl-L-methionine site.

Belongs to the methyltransferase superfamily. RsmH family.

It localises to the cytoplasm. It catalyses the reaction cytidine(1402) in 16S rRNA + S-adenosyl-L-methionine = N(4)-methylcytidine(1402) in 16S rRNA + S-adenosyl-L-homocysteine + H(+). Functionally, specifically methylates the N4 position of cytidine in position 1402 (C1402) of 16S rRNA. The sequence is that of Ribosomal RNA small subunit methyltransferase H from Legionella pneumophila (strain Corby).